The chain runs to 493 residues: Probable UTP--glucose-1-phosphate uridylyltransferase (493 aa).

Residues 105–108, glutamine 181, glycine 211, and aspartate 242 contribute to the UTP site; that span reads LTGK. 107 to 108 serves as a coordination point for substrate; the sequence is GK. Residue 240–242 participates in substrate binding; sequence NVD.

The protein belongs to the UDPGP type 1 family.

It catalyses the reaction alpha-D-glucose 1-phosphate + UTP + H(+) = UDP-alpha-D-glucose + diphosphate. In terms of biological role, plays a central role as a glucosyl donor in cellular metabolic pathways. The polypeptide is Probable UTP--glucose-1-phosphate uridylyltransferase (Saccharomyces cerevisiae (strain ATCC 204508 / S288c) (Baker's yeast)).